The following is a 345-amino-acid chain: D-fructose 1,6-bisphosphatase class 2/sedoheptulose 1,7-bisphosphatase (345 aa).

The Mn(2+) site is built by Asp33, Glu57, Asp97, and Glu100. Substrate is bound by residues 100–102 (EGT), Tyr131, 176–178 (RDR), and 198–200 (DGD). Glu225 lines the Mn(2+) pocket.

It belongs to the FBPase class 2 family. In terms of assembly, homotetramer. It depends on Mn(2+) as a cofactor.

The enzyme catalyses beta-D-fructose 1,6-bisphosphate + H2O = beta-D-fructose 6-phosphate + phosphate. The catalysed reaction is D-sedoheptulose 1,7-bisphosphate + H2O = D-sedoheptulose 7-phosphate + phosphate. Its pathway is carbohydrate biosynthesis; Calvin cycle. Functionally, catalyzes the hydrolysis of fructose 1,6-bisphosphate (Fru 1,6-P2) and sedoheptulose 1,7-bisphosphate (Sed 1,7-P2) to fructose 6-phosphate and sedoheptulose 7-phosphate, respectively. The chain is D-fructose 1,6-bisphosphatase class 2/sedoheptulose 1,7-bisphosphatase from Trichormus variabilis (strain ATCC 29413 / PCC 7937) (Anabaena variabilis).